Here is a 714-residue protein sequence, read N- to C-terminus: Calpain-1 catalytic subunit (714 aa).

The residue at position 2 (Ser-2) is an N-acetylserine. The 300-residue stretch at 55–354 (LFRDEAFPPV…FTRLEICNLT (300 aa)) folds into the Calpain catalytic domain. Residues Gln-109 and Asp-114 each contribute to the Ca(2+) site. Active-site residues include Cys-115, His-272, and Asn-296. Residues Asn-316, Asp-318, and Asp-323 each contribute to the Ca(2+) site. Thr-354 is subject to Phosphothreonine. Positions 355–526 (PDALKSRTIR…KSAGTVELDD (172 aa)) are domain III. The tract at residues 527–542 (QIQANLPDEQVLSEEE) is linker. EF-hand domains follow at residues 541–576 (EEIDENFKALFRQLAGEDMEISVKELRTILNRIISK), 585–618 (FSLESCRSMVNLMDRDGNGKLGLVEFNILWNRIR), 615–650 (NRIRNYLSIFRKFDLDKSGSMSAYEMRMAIESAGFK), and 680–714 (VRLETMFRFFKTLDTDLDGVVTFDLFKWLQLTMFA). The interval 543–713 (IDENFKALFR…LFKWLQLTMF (171 aa)) is domain IV. Ca(2+) contacts are provided by Asp-598, Asp-600, Asn-602, Lys-604, Glu-609, Asp-628, Asp-630, Ser-632, Ser-634, and Glu-639.

The protein belongs to the peptidase C2 family. Forms a heterodimer with a small (regulatory) subunit CAPNS1. Ca(2+) serves as cofactor. Undergoes calcium-induced successive autoproteolytic cleavages that generate a membrane-bound 78 kDa active form and an intracellular 75 kDa active form. Calpastatin reduces with high efficiency the transition from 78 kDa to 75 kDa calpain forms. Ubiquitous.

The protein localises to the cytoplasm. The protein resides in the cell membrane. It catalyses the reaction Broad endopeptidase specificity.. Activated by micromolar concentrations of calcium and inhibited by calpastatin. Functionally, calcium-regulated non-lysosomal thiol-protease which catalyzes limited proteolysis of substrates involved in cytoskeletal remodeling and signal transduction. Proteolytically cleaves CTBP1 at 'Asn-375', 'Gly-387' and 'His-409'. Cleaves and activates caspase-7 (CASP7). This Homo sapiens (Human) protein is Calpain-1 catalytic subunit.